The following is a 710-amino-acid chain: Solute carrier family 15 member 1 (710 aa).

Residues 1-21 (MGMSKSRGCFGYPLSIFFIVV) traverse the membrane as a helical segment. Residues 22-53 (NEFCERFSYYGMRALLVLYFRNFLGWDDDLST) are Extracellular-facing. The helical transmembrane segment at 54-74 (AIYHTFVALCYLTPILGALIA) threads the bilayer. Residues 75-82 (DSWLGKFK) lie on the Cytoplasmic side of the membrane. A helical membrane pass occupies residues 83–103 (TIVSLSIVYTIGQAVISVSSI). At 104 to 118 (NDLTDHDHDGSPNNL) the chain is on the extracellular side. The chain crosses the membrane as a helical span at residues 119–139 (PLHVALSMIGLALIALGTGGI). At 140-161 (KPCVSAFGGDQFEEGQEKQRNR) the chain is on the cytoplasmic side. Residues 162 to 182 (FFSIFYLAINAGSLLSTIITP) form a helical membrane-spanning segment. The Extracellular segment spans residues 183 to 198 (ILRVQQCGIHSQQACY). The chain crosses the membrane as a helical span at residues 199–219 (PLAFGVPAALMAVALIVFVLG). Residues 220–276 (SGMYKKFQPQGNIMGKVAKCIRFAIKNRFRHRSKAFPKRNHWLDWAKEKYDERLISQ) lie on the Cytoplasmic side of the membrane. The chain crosses the membrane as a helical span at residues 277–297 (IKIMTKVMFLYIPLPMFWALF). The Extracellular segment spans residues 298-327 (DQQGSRWTLQATTMTGKIGTIEIQPDQMQT). A helical membrane pass occupies residues 328-348 (VNAILIVIMVPIVDAVVYPLI). Topologically, residues 349–361 (AKCGFNFTSLKKM) are cytoplasmic. Residues 362–382 (TVGMFLASMAFVVAAIVQVEI) form a helical membrane-spanning segment. The Extracellular portion of the chain corresponds to 383 to 586 (DKTLPVFPSG…PPNTVNMALQ (204 aa)). Residues 383 to 586 (DKTLPVFPSG…PPNTVNMALQ (204 aa)) form an extracellular domain (ECD) region. N-linked (GlcNAc...) asparagine glycans are attached at residues Asn-415, Asn-439, Asn-510, Asn-532, and Asn-539. A helical transmembrane segment spans residues 587–607 (IPQYFLLTCGEVVFSVTGLEF). At 608–621 (SYSQAPSNMKSVLQ) the chain is on the cytoplasmic side. Residues 622–642 (AGWLLTVAIGNIIVLIVAEAG) form a helical membrane-spanning segment. Over 643 to 647 (HFDKQ) the chain is Extracellular. A helical transmembrane segment spans residues 648-668 (WAEYVLFASLLLVVCIIFAIM). The Cytoplasmic portion of the chain corresponds to 669 to 710 (ARFYTYINPAEIEAQFDEDEKKKGVGKENPYSSLEPVSQTNM). The disordered stretch occupies residues 687 to 710 (DEKKKGVGKENPYSSLEPVSQTNM). Polar residues predominate over residues 698-710 (PYSSLEPVSQTNM).

This sequence belongs to the major facilitator superfamily. Proton-dependent oligopeptide transporter (POT/PTR) (TC 2.A.17) family. As to quaternary structure, interacts (via extracellular domain region) with trypsin. As to expression, highly expressed in small intestine. Expression is restricted to pinealocytes.

Its subcellular location is the apical cell membrane. It carries out the reaction a dipeptide(out) + H(+)(out) = a dipeptide(in) + H(+)(in). The enzyme catalyses an L-amino acid tripeptide(out) + H(+)(out) = an L-amino acid tripeptide(in) + H(+)(in). It catalyses the reaction L-alanyl-L-lysine(out) + H(+)(out) = L-alanyl-L-lysine(in) + H(+)(in). The catalysed reaction is L-alanyl-L-proline(out) + H(+)(out) = L-alanyl-L-proline(in) + H(+)(in). It carries out the reaction L-alanyl-L-valine(out) + H(+)(out) = L-alanyl-L-valine(in) + H(+)(in). The enzyme catalyses carnosine(out) + H(+)(out) = carnosine(in) + H(+)(in). It catalyses the reaction glycyl-L-glutamine(out) + H(+)(out) = glycyl-L-glutamine(in) + H(+)(in). The catalysed reaction is glycyl-L-leucine(out) + H(+)(out) = glycyl-L-leucine(in) + H(+)(in). It carries out the reaction glycyl-L-proline(out) + H(+)(out) = glycyl-L-proline(in) + H(+)(in). The enzyme catalyses glycyl-sarcosine(out) + H(+)(out) = glycyl-sarcosine(in) + H(+)(in). It catalyses the reaction L-leucyl-L-leucine(out) + H(+)(out) = L-leucyl-L-leucine(in) + H(+)(in). The catalysed reaction is L-leucyl-L-proline(out) + H(+)(out) = L-leucyl-L-proline(in) + H(+)(in). It carries out the reaction L-phenylalanyl-L-leucine(out) + H(+)(out) = L-phenylalanyl-L-leucine(in) + H(+)(in). The enzyme catalyses L-phenylalanyl-L-phenylalanine(out) + H(+)(out) = L-phenylalanyl-L-phenylalanine(in) + H(+)(in). It catalyses the reaction L-lysyl-glycine(out) + H(+)(out) = L-lysyl-glycine(in) + H(+)(in). The catalysed reaction is L-tyrosylglycine(out) + H(+)(out) = L-tyrosylglycine(in) + H(+)(in). It carries out the reaction L-alanyl-L-aspartate(out) + 2 H(+)(out) = L-alanyl-L-aspartate(in) + 2 H(+)(in). The enzyme catalyses L-aspartyl-glycine(out) + 2 H(+)(out) = L-aspartyl-glycine(in) + 2 H(+)(in). It catalyses the reaction glycyl-L-aspartate(out) + 2 H(+)(out) = glycyl-L-aspartate(in) + 2 H(+)(in). The catalysed reaction is glycyl-L-glutamate(out) + 2 H(+)(out) = glycyl-L-glutamate(in) + 2 H(+)(in). It carries out the reaction L-alanyl-L-leucyl-L-alanine(out) + H(+)(out) = L-alanyl-L-leucyl-L-alanine(in) + H(+)(in). The enzyme catalyses L-alanyl-L-prolylglycine(out) + H(+)(out) = L-alanyl-L-prolylglycine(in) + H(+)(in). It catalyses the reaction glycylglycyl-L-isoleucine(out) + H(+)(out) = glycylglycyl-L-isoleucine(in) + H(+)(in). The catalysed reaction is glycylglycyl-L-proline(out) + H(+)(out) = glycylglycyl-L-proline(in) + H(+)(in). It carries out the reaction L-methionyl-L-phenylalanyl-L-methionine(out) + H(+)(out) = L-methionyl-L-phenylalanyl-L-methionine(in) + H(+)(in). The enzyme catalyses N-acetyl-D-muramoyl-L-alanyl-D-isoglutamine(out) + 2 H(+)(out) = N-acetyl-D-muramoyl-L-alanyl-D-isoglutamine(in) + 2 H(+)(in). It catalyses the reaction N(alpha)-formyl-L-methionyl-L-leucyl-L-phenylalanine(out) + 2 H(+)(out) = N(alpha)-formyl-L-methionyl-L-leucyl-L-phenylalanine(in) + 2 H(+)(in). Its function is as follows. Electrogenic proton-coupled amino-acid transporter that transports oligopeptides of 2 to 4 amino acids with a preference for dipeptides. Transports neutral and monovalently charged peptides with a proton to peptide stoichiometry of 1:1 or 2:1. Primarily responsible for the absorption of dietary di- and tripeptides from the small intestinal lumen. Mediates transepithelial transport of muramyl and N-formylated bacterial dipeptides contributing to recognition of pathogenic bacteria by the mucosal immune system. This chain is Solute carrier family 15 member 1 (Slc15a1), found in Rattus norvegicus (Rat).